The primary structure comprises 211 residues: Histidine biosynthesis bifunctional protein HisIE (211 aa).

Residues 1–122 are phosphoribosyl-AMP cyclohydrolase; sequence MSFKAAEVSS…DAQEESQMVW (122 aa). The interval 123 to 211 is phosphoribosyl-ATP pyrophosphohydrolase; that stretch reads LHQLEQLLAA…VVNKLKERHK (89 aa).

It in the N-terminal section; belongs to the PRA-CH family. The protein in the C-terminal section; belongs to the PRA-PH family.

Its subcellular location is the cytoplasm. It carries out the reaction 1-(5-phospho-beta-D-ribosyl)-ATP + H2O = 1-(5-phospho-beta-D-ribosyl)-5'-AMP + diphosphate + H(+). It catalyses the reaction 1-(5-phospho-beta-D-ribosyl)-5'-AMP + H2O = 1-(5-phospho-beta-D-ribosyl)-5-[(5-phospho-beta-D-ribosylamino)methylideneamino]imidazole-4-carboxamide. Its pathway is amino-acid biosynthesis; L-histidine biosynthesis; L-histidine from 5-phospho-alpha-D-ribose 1-diphosphate: step 2/9. It functions in the pathway amino-acid biosynthesis; L-histidine biosynthesis; L-histidine from 5-phospho-alpha-D-ribose 1-diphosphate: step 3/9. This chain is Histidine biosynthesis bifunctional protein HisIE, found in Vibrio parahaemolyticus serotype O3:K6 (strain RIMD 2210633).